The chain runs to 143 residues: Hemoglobin subunit alpha (143 aa).

At serine 2 the chain carries N-acetylserine. The 142-residue stretch at 2 to 143 (SLSDKDKAAV…VALALAEKYR (142 aa)) folds into the Globin domain. Histidine 60 lines the O2 pocket. Histidine 89 serves as a coordination point for heme b.

This sequence belongs to the globin family. As to quaternary structure, heterotetramer of two alpha chains and two beta chains. Red blood cells.

Functionally, involved in oxygen transport from the lung to the various peripheral tissues. This is Hemoglobin subunit alpha (hba) from Artedidraco orianae (Barbeled plunderfish).